Reading from the N-terminus, the 337-residue chain is Dehydrogenase FUB6 (337 aa).

This sequence belongs to the zinc-containing alcohol dehydrogenase family. Quinone oxidoreductase subfamily.

It functions in the pathway mycotoxin biosynthesis. Its function is as follows. Dehydrogenase; part of the gene cluster that mediates the biosynthesis of fusaric acid, a mycotoxin with low to moderate toxicity to animals and humans, but with high phytotoxic properties. L-aspartate is suggested as fusaric acid amino acid precursor that is activated and further processed to O-acetyl-L-homoserine by cluster enzymes aspartate kinase FUB3 and homoserine O-acetyltransferase FUB5, as well as enzymes of the primary metabolism. The polyketide synthase (PKS) FUB1 generates the triketide trans-2-hexenal which is presumptively released by the hydrolase FUB4 and linked to the NRPS-bound amino acid precursor by NAD(P)-dependent dehydrogenase FUB6. FUB1, FUB4, and the non-canonical NRPS Fub8 may form an enzyme complex. Further processing of the NRPS-bound intermediate might be carried out by FUB6 and the O-acetylhomoserine FUB7, enabling a spontaneous electrocyclization to close the carbon backbone of fusaric acid. Dihydrofusaric acid is likely to be released via reduction by the thioester reductase (TR) domain of FUB8 whereupon the final oxidation to fusaric acid may (also) be performed by the FMN-dependent dehydrogenase FUB9. This Gibberella fujikuroi (strain CBS 195.34 / IMI 58289 / NRRL A-6831) (Bakanae and foot rot disease fungus) protein is Dehydrogenase FUB6.